The primary structure comprises 257 residues: 1-(5-phosphoribosyl)-5-[(5-phosphoribosylamino)methylideneamino] imidazole-4-carboxamide isomerase (257 aa).

Asp8 serves as the catalytic Proton acceptor. Residue Asp129 is the Proton donor of the active site.

This sequence belongs to the HisA/HisF family.

Its subcellular location is the cytoplasm. The enzyme catalyses 1-(5-phospho-beta-D-ribosyl)-5-[(5-phospho-beta-D-ribosylamino)methylideneamino]imidazole-4-carboxamide = 5-[(5-phospho-1-deoxy-D-ribulos-1-ylimino)methylamino]-1-(5-phospho-beta-D-ribosyl)imidazole-4-carboxamide. Its pathway is amino-acid biosynthesis; L-histidine biosynthesis; L-histidine from 5-phospho-alpha-D-ribose 1-diphosphate: step 4/9. This Rippkaea orientalis (strain PCC 8801 / RF-1) (Cyanothece sp. (strain PCC 8801)) protein is 1-(5-phosphoribosyl)-5-[(5-phosphoribosylamino)methylideneamino] imidazole-4-carboxamide isomerase.